Here is a 190-residue protein sequence, read N- to C-terminus: Small ribosomal subunit protein uS5 (190 aa).

An S5 DRBM domain is found at F22–V85.

This sequence belongs to the universal ribosomal protein uS5 family. In terms of assembly, part of the 30S ribosomal subunit. Contacts proteins S4 and S8.

Functionally, with S4 and S12 plays an important role in translational accuracy. Its function is as follows. Located at the back of the 30S subunit body where it stabilizes the conformation of the head with respect to the body. The sequence is that of Small ribosomal subunit protein uS5 from Rhodopseudomonas palustris (strain BisA53).